Consider the following 336-residue polypeptide: Potassium channel subfamily K member 1 (336 aa).

The Cytoplasmic portion of the chain corresponds to 1–20; the sequence is MLQSLAGSSCVRLVERHRSA. The chain crosses the membrane as a helical span at residues 21 to 41; it reads WCFGFLVLGYLLYLVFGAVVF. The Extracellular segment spans residues 42–103; that stretch reads SSVELPYEDL…SNASGNWNWD (62 aa). N-linked (GlcNAc...) asparagine glycosylation is present at N95. The helical intramembrane region spans 104-116; sequence FASALFFASTVLS. An intramembrane segment occupies 117–122; sequence TTGYGH. Residues 117–122 are selectivity filter 1; sequence TTGYGH. The Extracellular segment spans residues 123–132; that stretch reads TVPLSDGGKA. The helical transmembrane segment at 133-156 threads the bilayer; sequence FCIIYSVIGIPFTLLFLTAVVQRV. Residues 157–181 lie on the Cytoplasmic side of the membrane; that stretch reads TVHVTRRPVLYFHVRWGFSKQVVAI. A helical transmembrane segment spans residues 182 to 202; the sequence is VHAVLLGLITVSCFFFIPAAV. Residues 203–211 lie on the Extracellular side of the membrane; that stretch reads FSVLEDDWN. The helical intramembrane region spans 212–224; sequence FLESFYFCFISLS. The segment at 225-230 is selectivity filter 2; the sequence is TIGLGD. An intramembrane segment occupies 225–231; the sequence is TIGLGDY. Residues 232-243 lie on the Extracellular side of the membrane; it reads VPGEGYNQKFRE. A helical transmembrane segment spans residues 244-267; sequence LYKIGITCYLLLGLIAMLVVLETF. The Cytoplasmic segment spans residues 268–336; that stretch reads CELHELKKFR…SACADGPANH (69 aa). A Glycyl lysine isopeptide (Lys-Gly) (interchain with G-Cter in SUMO) cross-link involves residue K274. Residues 293–299 form an important for intracellular retention in recycling endosomes region; the sequence is IIEHDQL. The disordered stretch occupies residues 315 to 336; sequence QKQNEPFVATPSSACADGPANH. A Phosphoserine modification is found at S326.

It belongs to the two pore domain potassium channel (TC 1.A.1.8) family. Homodimer; disulfide-linked. Heterodimer with KCNK2; disulfide-linked. In astrocytes, forms mostly heterodimeric potassium channels with KCNK2, with only a minor proportion of functional channels containing homodimeric KCNK1. Interacts with KCNK3 and KCNK9, forming functional heterodimeric channels. Interacts with GNG4. Identified in a complex with PSD and ARF6; interacts only with PSD that is bound to ARF6. Interacts with UBE2I. Sumoylation is controversial. Sumoylated by UBE2I. Not sumoylated when expressed in xenopus oocytes or mammalian cells. Sumoylation inactivates the channel, but does not interfere with expression at the cell membrane. Sumoylation of a single subunit is sufficient to silence the dimeric channel. Sumoylation of KCNK1 is sufficient to silence heterodimeric channels formed by KCNK1 and KCNK3 or KCNK9. Desumoylated by SENP1; this activates the channel. Desumoylated by SENP1; this strongly increases halothane-mediated activation of heterodimeric channels formed with KCNK9. SENP1 treatment has no effect. Expressed in renal distal tubules, especially in cortical collecting duct and cortical thick ascending limb, with lower levels in the connecting tubule.

The protein resides in the cell membrane. The protein localises to the recycling endosome. It is found in the synaptic cell membrane. Its subcellular location is the cytoplasmic vesicle. It localises to the perikaryon. The protein resides in the cell projection. The protein localises to the dendrite. It is found in the apical cell membrane. It catalyses the reaction K(+)(in) = K(+)(out). The catalysed reaction is NH4(+)(in) = NH4(+)(out). The enzyme catalyses Na(+)(in) = Na(+)(out). It carries out the reaction Rb(+)(in) = Rb(+)(out). It catalyses the reaction Cs(+)(in) = Cs(+)(out). The catalysed reaction is Li(+)(in) = Li(+)(out). The enzyme catalyses L-glutamate(out) = L-glutamate(in). It carries out the reaction chloride(in) = chloride(out). In terms of biological role, ion channel that contributes to passive transmembrane potassium transport and to the regulation of the resting membrane potential in brain astrocytes, but also in kidney and in other tissues. Forms dimeric channels through which potassium ions pass in accordance with their electrochemical gradient. The channel is selective for K(+) ions at physiological potassium concentrations and at neutral pH, but becomes permeable to Na(+) at subphysiological K(+) levels and upon acidification of the extracellular medium. The homodimer has very low potassium channel activity, when expressed in heterologous systems, and can function as weakly inward rectifying potassium channel. Channel activity is modulated by activation of serotonin receptors. Heterodimeric channels containing KCNK1 and KCNK2 have much higher activity, and may represent the predominant form in astrocytes. Heterodimeric channels containing KCNK1 and KCNK3 or KCNK9 have much higher activity. Heterodimeric channels formed by KCNK1 and KCNK9 may contribute to halothane-sensitive currents. Mediates outward rectifying potassium currents in dentate gyrus granule cells and contributes to the regulation of their resting membrane potential. Contributes to the regulation of action potential firing in dentate gyrus granule cells and down-regulates their intrinsic excitability. In astrocytes, the heterodimer formed by KCNK1 and KCNK2 is required for rapid glutamate release in response to activation of G-protein coupled receptors, such as F2R and CNR1. Required for normal ion and water transport in the kidney. Contributes to the regulation of the resting membrane potential of pancreatic beta cells. The low channel activity of homodimeric KCNK1 may be due to sumoylation. The low channel activity may be due to rapid internalization from the cell membrane and retention in recycling endosomes. Permeable to monovalent cations with ion selectivity for K(+) &gt; Rb(+) &gt;&gt; NH4(+) &gt;&gt; Cs(+) = Na(+) = Li(+). This is Potassium channel subfamily K member 1 from Oryctolagus cuniculus (Rabbit).